The primary structure comprises 99 residues: Cobalt transport protein CbiN (99 aa).

Helical transmembrane passes span 6–26 (VLMI…YSGL) and 68–88 (SLLF…FFGY).

This sequence belongs to the CbiN family. In terms of assembly, forms an energy-coupling factor (ECF) transporter complex composed of an ATP-binding protein (A component, CbiO), a transmembrane protein (T component, CbiQ) and 2 possible substrate-capture proteins (S components, CbiM and CbiN) of unknown stoichimetry.

It localises to the cell membrane. It functions in the pathway cofactor biosynthesis; adenosylcobalamin biosynthesis. Its function is as follows. Part of the energy-coupling factor (ECF) transporter complex CbiMNOQ involved in cobalt import. This Methanococcus vannielii (strain ATCC 35089 / DSM 1224 / JCM 13029 / OCM 148 / SB) protein is Cobalt transport protein CbiN.